A 405-amino-acid chain; its full sequence is Endo-1,4-beta-xylanase 5 (405 aa).

Residues 1–22 form the signal peptide; the sequence is MTRLATLITLAGLLAVSPGAYA. 2 N-linked (GlcNAc...) asparagine glycosylation sites follow: Asn-27 and Asn-69. One can recognise a GH10 domain in the interval 32–352; sequence STGAEGLNSL…KPAYTSVSSL (321 aa). Glu-166 functions as the Proton donor in the catalytic mechanism. N-linked (GlcNAc...) asparagine glycosylation is present at Asn-171. Residue Glu-273 is the Nucleophile of the active site. A disulfide bridge links Cys-302 with Cys-308. Gly-380 carries GPI-anchor amidated glycine lipidation. Positions 381-405 are cleaved as a propeptide — removed in mature form; it reads AGRETVSIAGLTLALSSLAFGMFML.

It belongs to the glycosyl hydrolase 10 (cellulase F) family.

It localises to the cell membrane. Its subcellular location is the secreted. It catalyses the reaction Endohydrolysis of (1-&gt;4)-beta-D-xylosidic linkages in xylans.. It functions in the pathway glycan degradation; xylan degradation. Functionally, endo-1,4-beta-xylanase involved in the hydrolysis of xylan, a major structural heterogeneous polysaccharide found in plant biomass representing the second most abundant polysaccharide in the biosphere, after cellulose. This chain is Endo-1,4-beta-xylanase 5 (XYL5), found in Pyricularia grisea (Crabgrass-specific blast fungus).